The following is a 381-amino-acid chain: Sulfate/thiosulfate import ATP-binding protein CysA (381 aa).

The region spanning 3–233 is the ABC transporter domain; it reads ILVYEVSKSL…PIDYFVGIFS (231 aa). An ATP-binding site is contributed by 35–42; it reads GPSGSGKS.

The protein belongs to the ABC transporter superfamily. Sulfate/tungstate importer (TC 3.A.1.6) family.

It localises to the plastid. The protein localises to the chloroplast. The catalysed reaction is sulfate(out) + ATP + H2O = sulfate(in) + ADP + phosphate + H(+). The enzyme catalyses thiosulfate(out) + ATP + H2O = thiosulfate(in) + ADP + phosphate + H(+). Functionally, part of the ABC transporter complex involved in sulfate/thiosulfate import. Responsible for energy coupling to the transport system. The sequence is that of Sulfate/thiosulfate import ATP-binding protein CysA from Anthoceros angustus (Hornwort).